The primary structure comprises 536 residues: Glucan 1,6-alpha-glucosidase (536 aa).

The active-site Nucleophile is D194. The active-site Proton donor is the E236.

The protein belongs to the glycosyl hydrolase 13 family.

Its subcellular location is the cytoplasm. The catalysed reaction is Hydrolysis of (1-&gt;6)-alpha-D-glucosidic linkages in (1-&gt;6)-alpha-D-glucans and derived oligosaccharides.. Functionally, the physiological substrates may be short isomaltosaccharides. This chain is Glucan 1,6-alpha-glucosidase (dexB), found in Streptococcus mutans serotype c (strain ATCC 700610 / UA159).